We begin with the raw amino-acid sequence, 185 residues long: Ribosome-recycling factor (185 aa).

Residues 139-159 are disordered; the sequence is IDSLEKDGDVSGDEADRAKKK. Over residues 141 to 159 the composition is skewed to basic and acidic residues; it reads SLEKDGDVSGDEADRAKKK.

The protein belongs to the RRF family.

It is found in the cytoplasm. Its function is as follows. Responsible for the release of ribosomes from messenger RNA at the termination of protein biosynthesis. May increase the efficiency of translation by recycling ribosomes from one round of translation to another. This Sorangium cellulosum (strain So ce56) (Polyangium cellulosum (strain So ce56)) protein is Ribosome-recycling factor.